The following is a 503-amino-acid chain: Glutamate--tRNA ligase (503 aa).

The 'HIGH' region signature appears at 15–25 (PSPTGYLHVGG). Residues 262–266 (KLSKR) carry the 'KMSKS' region motif. Lysine 265 is a binding site for ATP.

Belongs to the class-I aminoacyl-tRNA synthetase family. Glutamate--tRNA ligase type 1 subfamily. In terms of assembly, monomer.

The protein resides in the cytoplasm. The catalysed reaction is tRNA(Glu) + L-glutamate + ATP = L-glutamyl-tRNA(Glu) + AMP + diphosphate. Catalyzes the attachment of glutamate to tRNA(Glu) in a two-step reaction: glutamate is first activated by ATP to form Glu-AMP and then transferred to the acceptor end of tRNA(Glu). In Prosthecochloris aestuarii (strain DSM 271 / SK 413), this protein is Glutamate--tRNA ligase.